A 222-amino-acid chain; its full sequence is Sperm acrosome-associated protein 9 (222 aa).

A disordered region spans residues 164–222 (QHVSEPQAHQESTRGAARPAQAIGTQPRATKHKCRQLTKASLKPRGCSKPPWRPPGGKL).

As to quaternary structure, microtubule inner protein component of sperm flagellar doublet microtubules. Interacts with CABP1 and CALR. Interacts with INCA1. Interacts with microtubules.

The protein resides in the cytoplasm. The protein localises to the cytoplasmic vesicle. Its subcellular location is the secretory vesicle. It is found in the acrosome. It localises to the cytoskeleton. The protein resides in the cilium basal body. The protein localises to the flagellum axoneme. Its subcellular location is the cilium axoneme. It is found in the nucleus. Microtubule inner protein (MIP) part of the dynein-decorated doublet microtubules (DMTs) of multiciliated respiratory cells and the distal singlet microtubules of monoflagellated spermatozoa. Forms an extensive interaction network cross-linking the lumen of axonemal doublet microtubules. The protein is Sperm acrosome-associated protein 9 of Homo sapiens (Human).